Here is a 521-residue protein sequence, read N- to C-terminus: Vang-like protein 2 (521 aa).

The tract at residues 1 to 81 (MDTESQYSGY…TTVVTGTSEH (81 aa)) is disordered. The Cytoplasmic portion of the chain corresponds to 1–108 (MDTESQYSGY…VPLDCSRHLG (108 aa)). Residues 15–33 (GHSRSSRKHRDRRDRHRSK) show a composition bias toward basic residues. Residues 57 to 67 (ESTRGDERDDN) are compositionally biased toward basic and acidic residues. Residues 69 to 81 (GETTTVVTGTSEH) are compositionally biased toward low complexity. Residues 109-129 (VAAGATLALLSFLTPLAFLLL) traverse the membrane as a helical segment. Topologically, residues 130–147 (PPLLWREELEPCGTACEG) are extracellular. Residues 148 to 168 (LFISVAFKLLILLLGSWALFF) form a helical membrane-spanning segment. The Cytoplasmic segment spans residues 169–178 (RRPKASLPRV). The chain crosses the membrane as a helical span at residues 179-199 (FVLRALLMVLVFLLVVSYWLF). Topologically, residues 200-217 (YGVRILDARERSYQGVVQ) are extracellular. The chain crosses the membrane as a helical span at residues 218–238 (FAVSLVDALLFVHYLAVVLLE). Over 239–521 (LRQLQPQFTL…VMRLQSETSV (283 aa)) the chain is Cytoplasmic.

This sequence belongs to the Vang family. Homodimer and heterodimer with VANGL1. Interacts through its C-terminal region with the N-terminal half of DVL1, DVL2 and DVL3. The PDZ domain of DVL1, DVL2 and DVL3 is required for the interaction. Also interacts with the PDZ domains of MAGI3, SCRIB/SCRB1 and FZD3. Interacts with PRICKLE3.

The protein localises to the cell membrane. Its function is as follows. Involved in the control of early morphogenesis and patterning of both axial midline structures and the development of neural plate. Plays a role in the regulation of planar cell polarity, particularly in the orientation of stereociliary bundles in the cochlea. Required for polarization and movement of myocardializing cells in the outflow tract and seems to act via RHOA signaling to regulate this process. Required for cell surface localization of FZD3 and FZD6 in the inner ear. This chain is Vang-like protein 2 (VANGL2), found in Homo sapiens (Human).